Consider the following 519-residue polypeptide: GATA zinc finger domain-containing protein 8 (519 aa).

Disordered stretches follow at residues 25–182, 198–249, 273–359, and 431–453; these read YSTG…SSSG, SNIN…SNNT, SNNM…NNKQ, and DERQQKKRMESDKNAEKREKRRE. A compositionally biased stretch (low complexity) spans 37–156; sequence TNNSQNKTNN…SSSITSPSSN (120 aa). The segment covering 172 to 182 has biased composition (polar residues); that stretch reads SPNNKQVSSSG. Over residues 273–357 the composition is skewed to low complexity; that stretch reads SNNMNINNQH…SNINNNNNNN (85 aa). Residues 429-461 adopt a coiled-coil conformation; sequence KTDERQQKKRMESDKNAEKREKRREASRLLNNV. Residues 462-487 form a GATA-type zinc finger; the sequence is CRNCKTTETPEWRKGPDGTKSLCNAC.

The polypeptide is GATA zinc finger domain-containing protein 8 (gtaH) (Dictyostelium discoideum (Social amoeba)).